We begin with the raw amino-acid sequence, 523 residues long: WD repeat-containing protein WDS homolog (523 aa).

In terms of domain architecture, LisH spans 16–48 (KKHEFIRILVQCLYSLGFKNSASCLEFESKILY). Residues 49-107 (KTADSEFLEKQVLSGNWDSCVQVLDRIFDNSMDDTRNTALYLVFKQCLLEYLKRGDVSL) enclose the CTLH domain. 7 WD repeats span residues 222–261 (AHKNEVWFVQFSNSGKYLATASSDCTAIIWKVLDDNKVEL), 267–306 (SHQNPVSFVSWSPDDTKLLTCGNAEVLKLWDVDTGVLRHT), 310–353 (NNTG…KAWR), 355–394 (TRIPKVVDLAVTPDGESMITVFSDKEIRILNLETKVERVI), 395–434 (SEEQPITSLSISGDGKFFIVNLSCQEIHLWDLAGEWKQPL), 438–480 (GHRQ…PLEV), and 483–523 (GHSM…KPLN).

In terms of assembly, interacts with RANBPM.

The protein resides in the cytoplasm. The sequence is that of WD repeat-containing protein WDS homolog from Arabidopsis thaliana (Mouse-ear cress).